Consider the following 80-residue polypeptide: D-alanyl carrier protein 2 (80 aa).

A Carrier domain is found at 1-80; sequence MIMDDVKATV…KIVAKVASLQ (80 aa). An O-(pantetheine 4'-phosphoryl)serine modification is found at Ser38.

The protein belongs to the DltC family. 4'-phosphopantetheine is transferred from CoA to a specific serine of apo-DCP.

Its subcellular location is the cytoplasm. It participates in cell wall biogenesis; lipoteichoic acid biosynthesis. Its function is as follows. Carrier protein involved in the D-alanylation of lipoteichoic acid (LTA). The loading of thioester-linked D-alanine onto DltC is catalyzed by D-alanine--D-alanyl carrier protein ligase DltA. The DltC-carried D-alanyl group is further transferred to cell membrane phosphatidylglycerol (PG) by forming an ester bond, probably catalyzed by DltD. D-alanylation of LTA plays an important role in modulating the properties of the cell wall in Gram-positive bacteria, influencing the net charge of the cell wall. The sequence is that of D-alanyl carrier protein 2 from Lactiplantibacillus plantarum (strain ATCC BAA-793 / NCIMB 8826 / WCFS1) (Lactobacillus plantarum).